The primary structure comprises 258 residues: 6-carboxyhexanoate--CoA ligase (258 aa).

Belongs to the BioW family. As to quaternary structure, homodimer. Requires Mg(2+) as cofactor.

The enzyme catalyses heptanedioate + ATP + CoA = 6-carboxyhexanoyl-CoA + AMP + diphosphate. The protein operates within metabolic intermediate metabolism; pimeloyl-CoA biosynthesis; pimeloyl-CoA from pimelate: step 1/1. Catalyzes the transformation of pimelate into pimeloyl-CoA with concomitant hydrolysis of ATP to AMP. The sequence is that of 6-carboxyhexanoate--CoA ligase from Bacillus spizizenii (strain ATCC 23059 / NRRL B-14472 / W23) (Bacillus subtilis subsp. spizizenii).